We begin with the raw amino-acid sequence, 414 residues long: Gamma-glutamyl phosphate reductase (414 aa).

It belongs to the gamma-glutamyl phosphate reductase family.

It localises to the cytoplasm. The catalysed reaction is L-glutamate 5-semialdehyde + phosphate + NADP(+) = L-glutamyl 5-phosphate + NADPH + H(+). It functions in the pathway amino-acid biosynthesis; L-proline biosynthesis; L-glutamate 5-semialdehyde from L-glutamate: step 2/2. In terms of biological role, catalyzes the NADPH-dependent reduction of L-glutamate 5-phosphate into L-glutamate 5-semialdehyde and phosphate. The product spontaneously undergoes cyclization to form 1-pyrroline-5-carboxylate. This is Gamma-glutamyl phosphate reductase from Thermoanaerobacter sp. (strain X514).